Reading from the N-terminus, the 270-residue chain is Probable thioesterase BOA10 (270 aa).

This sequence belongs to the AMT4 thioesterase family.

The protein operates within polyketide biosynthesis. In terms of biological role, probable thioesterase; part of the gene cluster B that mediates the biosynthesis of botcinic acid and its botcinin derivatives, acetate-derived polyketides that contribute to virulence when combined with the sesquiterpene botrydial. Botcinic acid and its derivatives have been shown to induce chlorosis and necrosis during host plant infection, but also have antifungal activities. Two polyketide synthases, BOA6 and BOA9, are involved in the biosynthesis of botcinins. BOA6 mediates the formation of the per-methylated tetraketide core by condensation of four units of malonyl-CoA with one unit of acetyl-CoA, which would be methylated in activated methylene groups to yield a bicyclic acid intermediate that could then either be converted to botrylactone derivatives or lose the starter acetate unit through a retro-Claisen type C-C bond cleavage to yield botcinin derivatives. The second polyketide synthase, BOA9, is probably required for the biosynthesis of the tetraketide side chain of botcinins. The methyltransferase (MT) domain within BOA6 is probably responsible for the incorporation of four methyl groups. The trans-enoyl reductase BOA5 might take over the enoyl reductase function of BOA6 that misses an ER domain. The monooxygenases BOA2, BOA3 and BOA4 might be involved in further hydroxylations at C4, C5 and C8, whereas BOA7, close to BOA9, could potentially be involved in the hydroxylation at C4 in the side chain of botcinins. The protein is Probable thioesterase BOA10 of Botryotinia fuckeliana (strain B05.10) (Noble rot fungus).